The primary structure comprises 138 residues: Ribulose bisphosphate carboxylase small subunit (138 aa).

Belongs to the RuBisCO small chain family. In terms of assembly, heterohexadecamer of 8 large and 8 small subunits.

The protein localises to the plastid. The protein resides in the chloroplast. RuBisCO catalyzes two reactions: the carboxylation of D-ribulose 1,5-bisphosphate, the primary event in carbon dioxide fixation, as well as the oxidative fragmentation of the pentose substrate in the photorespiration process. Both reactions occur simultaneously and in competition at the same active site. Although the small subunit is not catalytic it is essential for maximal activity. The polypeptide is Ribulose bisphosphate carboxylase small subunit (Porphyridium aerugineum (Red microalga)).